Consider the following 261-residue polypeptide: Cytochrome c oxidase subunit 3 (261 aa).

Over 1-15 (MTHQAHAYHMVDPSP) the chain is Mitochondrial matrix. Residues 16–34 (WPLTGAVAALLMTSGLAVW) form a helical membrane-spanning segment. Residues 35–40 (FHFHST) lie on the Mitochondrial intermembrane side of the membrane. Residues 41 to 66 (TLMALGTVLLLLTMYQWWRDIIREGT) traverse the membrane as a helical segment. The Mitochondrial matrix segment spans residues 67–72 (FQGHHT). A helical membrane pass occupies residues 73-105 (PPVQKGLRYGMILFITSEVFFFLGFFWAFYHAS). The Mitochondrial intermembrane portion of the chain corresponds to 106-128 (LAPTPELGGCWPPTGITTLDPFE). Residues 129–152 (VPLLNTAVLLASGVTVTWAHHSIM) traverse the membrane as a helical segment. Topologically, residues 153–155 (EGE) are mitochondrial matrix. Residues 156–183 (RKQAIHSLTLTILLGFYFTFLQGLEYYD) traverse the membrane as a helical segment. At 184–190 (APFTIAD) the chain is on the mitochondrial intermembrane side. The chain crosses the membrane as a helical span at residues 191-223 (GVYGSTFFVATGFHGLHVIIGSTFLAVCLLRQI). Residues 224-232 (RYHFTSEHH) are Mitochondrial matrix-facing. A helical membrane pass occupies residues 233–256 (FGFEAAAWYWHFVDVVWLFLYISI). Residues 257-261 (YWWGS) lie on the Mitochondrial intermembrane side of the membrane.

The protein belongs to the cytochrome c oxidase subunit 3 family. Component of the cytochrome c oxidase (complex IV, CIV), a multisubunit enzyme composed of 14 subunits. The complex is composed of a catalytic core of 3 subunits MT-CO1, MT-CO2 and MT-CO3, encoded in the mitochondrial DNA, and 11 supernumerary subunits COX4I, COX5A, COX5B, COX6A, COX6B, COX6C, COX7A, COX7B, COX7C, COX8 and NDUFA4, which are encoded in the nuclear genome. The complex exists as a monomer or a dimer and forms supercomplexes (SCs) in the inner mitochondrial membrane with NADH-ubiquinone oxidoreductase (complex I, CI) and ubiquinol-cytochrome c oxidoreductase (cytochrome b-c1 complex, complex III, CIII), resulting in different assemblies (supercomplex SCI(1)III(2)IV(1) and megacomplex MCI(2)III(2)IV(2)).

It is found in the mitochondrion inner membrane. The catalysed reaction is 4 Fe(II)-[cytochrome c] + O2 + 8 H(+)(in) = 4 Fe(III)-[cytochrome c] + 2 H2O + 4 H(+)(out). Its function is as follows. Component of the cytochrome c oxidase, the last enzyme in the mitochondrial electron transport chain which drives oxidative phosphorylation. The respiratory chain contains 3 multisubunit complexes succinate dehydrogenase (complex II, CII), ubiquinol-cytochrome c oxidoreductase (cytochrome b-c1 complex, complex III, CIII) and cytochrome c oxidase (complex IV, CIV), that cooperate to transfer electrons derived from NADH and succinate to molecular oxygen, creating an electrochemical gradient over the inner membrane that drives transmembrane transport and the ATP synthase. Cytochrome c oxidase is the component of the respiratory chain that catalyzes the reduction of oxygen to water. Electrons originating from reduced cytochrome c in the intermembrane space (IMS) are transferred via the dinuclear copper A center (CU(A)) of subunit 2 and heme A of subunit 1 to the active site in subunit 1, a binuclear center (BNC) formed by heme A3 and copper B (CU(B)). The BNC reduces molecular oxygen to 2 water molecules using 4 electrons from cytochrome c in the IMS and 4 protons from the mitochondrial matrix. This chain is Cytochrome c oxidase subunit 3 (mt-co3), found in Gadus morhua (Atlantic cod).